The primary structure comprises 148 residues: 3-hydroxyacyl-[acyl-carrier-protein] dehydratase FabZ (148 aa).

H55 is a catalytic residue.

It belongs to the thioester dehydratase family. FabZ subfamily.

The protein localises to the cytoplasm. The catalysed reaction is a (3R)-hydroxyacyl-[ACP] = a (2E)-enoyl-[ACP] + H2O. In terms of biological role, involved in unsaturated fatty acids biosynthesis. Catalyzes the dehydration of short chain beta-hydroxyacyl-ACPs and long chain saturated and unsaturated beta-hydroxyacyl-ACPs. The protein is 3-hydroxyacyl-[acyl-carrier-protein] dehydratase FabZ of Haemophilus influenzae (strain PittEE).